The following is a 61-amino-acid chain: DGYIKRHDGCKVTCLINDNYCDTECKREGGSYGYCYSVGFACWCEGLPDDKAWKSETNTCD.

Positions 1-61 constitute an LCN-type CS-alpha/beta domain; the sequence is DGYIKRHDGC…AWKSETNTCD (61 aa). Cystine bridges form between cysteine 10–cysteine 60, cysteine 14–cysteine 35, cysteine 21–cysteine 42, and cysteine 25–cysteine 44.

As to expression, expressed by the venom gland.

Its subcellular location is the secreted. Excitatory insect toxins induce a spastic paralysis. They bind voltage-independently to sodium channels (Nav) and shift the voltage of activation toward more negative potentials thereby affecting sodium channel activation and promoting spontaneous and repetitive firing. This toxin elicits excitatory activity with no flaccid paralysis despite its high degree of sequence similarity with other depressant insect toxins. This toxin is active only on insects. The sequence is that of Insect toxin AaHIT5 from Androctonus australis (Sahara scorpion).